Reading from the N-terminus, the 273-residue chain is Dermonecrotic toxin LhSicTox-alphaIA1ii (273 aa).

His5 is an active-site residue. Mg(2+) contacts are provided by Glu25 and Asp27. His41 functions as the Nucleophile in the catalytic mechanism. 2 cysteine pairs are disulfide-bonded: Cys45–Cys51 and Cys47–Cys190. A Mg(2+)-binding site is contributed by Asp85.

This sequence belongs to the arthropod phospholipase D family. Class II subfamily. Requires Mg(2+) as cofactor. As to expression, expressed by the venom gland.

It localises to the secreted. It carries out the reaction an N-(acyl)-sphingosylphosphocholine = an N-(acyl)-sphingosyl-1,3-cyclic phosphate + choline. The enzyme catalyses an N-(acyl)-sphingosylphosphoethanolamine = an N-(acyl)-sphingosyl-1,3-cyclic phosphate + ethanolamine. The catalysed reaction is a 1-acyl-sn-glycero-3-phosphocholine = a 1-acyl-sn-glycero-2,3-cyclic phosphate + choline. It catalyses the reaction a 1-acyl-sn-glycero-3-phosphoethanolamine = a 1-acyl-sn-glycero-2,3-cyclic phosphate + ethanolamine. Its function is as follows. Dermonecrotic toxins cleave the phosphodiester linkage between the phosphate and headgroup of certain phospholipids (sphingolipid and lysolipid substrates), forming an alcohol (often choline) and a cyclic phosphate. This toxin acts on sphingomyelin (SM). It may also act on ceramide phosphoethanolamine (CPE), lysophosphatidylcholine (LPC) and lysophosphatidylethanolamine (LPE), but not on lysophosphatidylserine (LPS), and lysophosphatidylglycerol (LPG). It acts by transphosphatidylation, releasing exclusively cyclic phosphate products as second products. Induces dermonecrosis, hemolysis, increased vascular permeability, edema, inflammatory response, and platelet aggregation. The polypeptide is Dermonecrotic toxin LhSicTox-alphaIA1ii (Loxosceles hirsuta (Recluse spider)).